Here is a 234-residue protein sequence, read N- to C-terminus: Mitochondrial assembly of ribosomal large subunit protein 1 (234 aa).

Residues 63-88 form a disordered region; it reads SEPGLEERAEGTVNEGRPESDAADHT.

This sequence belongs to the Iojap/RsfS family. Associates with the mitochondrial ribosome large subunit (39S) via interaction with MRPL12 and/or MRPL14. The interaction generates steric hindrance that is expected to prevent premature association of the 28S and 39S ribosomal subunits. Interacts with intermediates of the mitochondrial ribosome large subunit (mt-LSU) (recruits the mitochondrial ribosome and complex I assembly factor AltMIEF1 and NDUFAB1); regulates mitochondrial ribosomes assembly. Interacts with MRPL12 and MRPL14.

It localises to the mitochondrion matrix. Its function is as follows. Required for normal mitochondrial ribosome function and mitochondrial translation. May play a role in ribosome biogenesis by preventing premature association of the 28S and 39S ribosomal subunits. Interacts with mitochondrial ribosomal protein uL14m (MRPL14), probably blocking formation of intersubunit bridge B8, preventing association of the 28S and 39S ribosomal subunits. Addition to isolated mitochondrial ribosomal subunits partially inhibits translation, probably by interfering with the association of the 28S and 39S ribosomal subunits and the formation of functional ribosomes. May also participate in the assembly and/or regulation of the stability of the large subunit of the mitochondrial ribosome. May function as a ribosomal silencing factor. The chain is Mitochondrial assembly of ribosomal large subunit protein 1 (MALSU1) from Homo sapiens (Human).